Here is a 262-residue protein sequence, read N- to C-terminus: Small ribosomal subunit protein eS1 (262 aa).

This sequence belongs to the eukaryotic ribosomal protein eS1 family. Component of the small ribosomal subunit. Mature ribosomes consist of a small (40S) and a large (60S) subunit. The 40S subunit contains about 33 different proteins and 1 molecule of RNA (18S). The 60S subunit contains about 49 different proteins and 3 molecules of RNA (25S, 5.8S and 5S).

It localises to the cytoplasm. The chain is Small ribosomal subunit protein eS1 from Theileria annulata.